The following is a 279-amino-acid chain: Shikimate dehydrogenase (NADP(+)) (279 aa).

Shikimate contacts are provided by residues Ser-20–Ser-22 and Thr-67. Lys-71 (proton acceptor) is an active-site residue. Asp-83 contributes to the NADP(+) binding site. Asn-92 and Asp-108 together coordinate shikimate. NADP(+) is bound by residues Gly-134–Ala-138 and Leu-223. Shikimate is bound at residue Tyr-225. Gly-246 lines the NADP(+) pocket.

The protein belongs to the shikimate dehydrogenase family. Homodimer.

It catalyses the reaction shikimate + NADP(+) = 3-dehydroshikimate + NADPH + H(+). It participates in metabolic intermediate biosynthesis; chorismate biosynthesis; chorismate from D-erythrose 4-phosphate and phosphoenolpyruvate: step 4/7. Involved in the biosynthesis of the chorismate, which leads to the biosynthesis of aromatic amino acids. Catalyzes the reversible NADPH linked reduction of 3-dehydroshikimate (DHSA) to yield shikimate (SA). This is Shikimate dehydrogenase (NADP(+)) from Cereibacter sphaeroides (strain ATCC 17029 / ATH 2.4.9) (Rhodobacter sphaeroides).